The chain runs to 251 residues: tRNA-uridine aminocarboxypropyltransferase 2 (251 aa).

Zn(2+)-binding residues include Cys23, Cys26, Cys33, and Cys35. A DXTW motif is present at residues 131–134; it reads DGTW.

It belongs to the TDD superfamily. DTWD2 family.

The enzyme catalyses a uridine in tRNA + S-adenosyl-L-methionine = a 3-[(3S)-3-amino-3-carboxypropyl]uridine in tRNA + S-methyl-5'-thioadenosine + H(+). Its function is as follows. Catalyzes the formation of 3-(3-amino-3-carboxypropyl)uridine (acp3U) at position 20a in the D-loop of several cytoplasmic tRNAs (acp3U(20a)). In Drosophila melanogaster (Fruit fly), this protein is tRNA-uridine aminocarboxypropyltransferase 2.